Consider the following 460-residue polypeptide: A-type ATP synthase subunit B (460 aa).

Belongs to the ATPase alpha/beta chains family. In terms of assembly, has multiple subunits with at least A(3), B(3), C, D, E, F, H, I and proteolipid K(x).

The protein resides in the cell membrane. Its function is as follows. Component of the A-type ATP synthase that produces ATP from ADP in the presence of a proton gradient across the membrane. The B chain is a regulatory subunit. In Methanosarcina barkeri (strain Fusaro / DSM 804), this protein is A-type ATP synthase subunit B.